The following is an 816-amino-acid chain: Ribonucleoside-diphosphate reductase large subunit (816 aa).

In terms of domain architecture, ATP-cone spans 1–92 (MYVVKRDGRQ…VSNLHKNTKK (92 aa)). ATP contacts are provided by residues 5-6 (KR), 11-17 (ETVHFDK), T53, and D57. GDP contacts are provided by S202 and S217. C218 and C444 form a disulfide bridge. DTTP-binding positions include 226–228 (DSI), K243, R256, and 263–264 (RG). N427 is a GDP binding site. The active-site Proton acceptor is the N427. The active-site Cysteine radical intermediate is the C429. Residues E431 and 623 to 626 (TAST) contribute to the GDP site. E431 functions as the Proton acceptor in the catalytic mechanism.

Belongs to the ribonucleoside diphosphate reductase large chain family. Heterotetramer of two large/R1 and two small/R2 subunits. A radical transfer pathway may occur between 'Tyr-125' of protein R2 and R1. Contains a disulfide bonds. Binding of the substrate occurs primarily when the active-site cysteines are reduced. As to expression, highly expressed in actively growing tissues such as young leaves, shoot apices, inflorescences and carpels. Very low expression in cotyledons, adult and cauline leaves and senescent leaves.

The protein localises to the cytoplasm. The enzyme catalyses a 2'-deoxyribonucleoside 5'-diphosphate + [thioredoxin]-disulfide + H2O = a ribonucleoside 5'-diphosphate + [thioredoxin]-dithiol. Under complex allosteric control mediated by deoxynucleoside triphosphates and ATP binding to separate specificity and activation sites on the large subunit. The type of nucleotide bound at the specificity site determines substrate preference. It seems probable that ATP makes the enzyme reduce CDP and UDP, dGTP favors ADP reduction and dTTP favors GDP reduction. Stimulated by ATP and inhibited by dATP binding to the activity site. In terms of biological role, provides the precursors necessary for DNA synthesis. Catalyzes the biosynthesis of deoxyribonucleotides from the corresponding ribonucleotides. R1 contains the binding sites for both substrates and allosteric effectors and carries out the actual reduction of the ribonucleotide. Ribonucleotide reductase (RNR) complex function is essential for efficient organellar DNA degradation in pollen. Involved in chloroplast division. The sequence is that of Ribonucleoside-diphosphate reductase large subunit from Arabidopsis thaliana (Mouse-ear cress).